Reading from the N-terminus, the 452-residue chain is MQRRIMGIETEFGVTCTFHGHRRLSPDEVARYLFRRVVSWGRSSNVFLRNGARLYLDVGSHPEYATAECDSLHQLVTHDRAGERVLEELLIDAEQRLAEEGIGGDIYLFKNNTDSAGNSYGCHENFLVVRAGEFSRISDVLLPFLVTRQLICGAGKVLQTPKAATFCLSQRAEHIWEGVSSATTRSRPIINTRDEPHADAEKYRRLHVIVGDSNMSETTTMLKVGTAALVLEMIEAGVAFRDFALDNPIRAIREVSHDLTGRRPVRLAGGRQASALDIQREYYARAVEHLRNRDRDPQIDQVVDLWGRALDAVEAQDFAKVDTEIDWVIKRKLFQRYQDRYDMELSDPKIAQLDLAYHDIKRGRGVFDLLQRKGLAKRITEDEAVDAAVDTPPQTTRAKLRGDFITAAQEAGRDFTVDWVHLKLNDQAQRTVLCKDPFRSVDERVDRLIASM.

Glu-9 contacts Mg(2+). Arg-53 is an ATP binding site. Mg(2+) is bound at residue Tyr-55. The active-site Proton acceptor is Asp-57. Glu-63 provides a ligand contact to Mg(2+). The ATP site is built by Thr-66 and Trp-419.

This sequence belongs to the Pup ligase/Pup deamidase family. Pup-conjugating enzyme subfamily.

The enzyme catalyses ATP + [prokaryotic ubiquitin-like protein]-L-glutamate + [protein]-L-lysine = ADP + phosphate + N(6)-([prokaryotic ubiquitin-like protein]-gamma-L-glutamyl)-[protein]-L-lysine.. Its pathway is protein degradation; proteasomal Pup-dependent pathway. It functions in the pathway protein modification; protein pupylation. In terms of biological role, catalyzes the covalent attachment of the prokaryotic ubiquitin-like protein modifier Pup to the proteasomal substrate proteins, thereby targeting them for proteasomal degradation. This tagging system is termed pupylation. The ligation reaction involves the side-chain carboxylate of the C-terminal glutamate of Pup and the side-chain amino group of a substrate lysine. This chain is Pup--protein ligase, found in Nocardia farcinica (strain IFM 10152).